We begin with the raw amino-acid sequence, 521 residues long: Glucose-1-phosphate adenylyltransferase small subunit, chloroplastic (521 aa).

The tract at residues 1–24 (MAASIGALKSSPSSHNCINERRND) is disordered. A chloroplast-targeting transit peptide spans 1–72 (MAASIGALKS…RSPLIVSPKA (72 aa)).

This sequence belongs to the bacterial/plant glucose-1-phosphate adenylyltransferase family. As to quaternary structure, heterotetramer.

The protein localises to the plastid. It localises to the chloroplast. The catalysed reaction is alpha-D-glucose 1-phosphate + ATP + H(+) = ADP-alpha-D-glucose + diphosphate. The protein operates within glycan biosynthesis; starch biosynthesis. Activated by 3'phosphoglycerate, inhibited by orthophosphate. Allosteric regulation. Functionally, this protein plays a role in synthesis of starch. It catalyzes the synthesis of the activated glycosyl donor, ADP-glucose from Glc-1-P and ATP. The polypeptide is Glucose-1-phosphate adenylyltransferase small subunit, chloroplastic (Solanum lycopersicum (Tomato)).